Reading from the N-terminus, the 887-residue chain is PAN2-PAN3 deadenylation complex subunit Pan3 (887 aa).

A C3H1-type zinc finger spans residues 49–77; it reads GVKLKYCRYYAKDKTCFYGEECQFLHEDP. 3 disordered regions span residues 111–139, 280–307, and 321–393; these read GGGA…GLDG, ENNL…SNVS, and PSMG…GQVI. The necessary and sufficient for interaction with PABPC1 but not needed for interaction with PAN2 stretch occupies residues 147 to 498; sequence MDGGALTDAS…PPPNRIQKSS (352 aa). 2 stretches are compositionally biased toward polar residues: residues 281–290 and 298–307; these read NNLQTPNPTA and GSTSRLSNVS. The PABPC-interacting motif-2 (PAM-2) signature appears at 284–299; it reads QTPNPTASEFIPKGGS. A phosphoserine mark is found at Ser-354 and Ser-361. Residues 463–750 are pseudokinase domain; that stretch reads QIDQADMPAV…SVNDIMPMIG (288 aa). ATP is bound by residues Arg-521, 570–577, and 644–645; these read DFHAGGET and TK. Residues 789-887 are knob domain; the sequence is TINERPEFQK…ELIAAANGQL (99 aa).

This sequence belongs to the protein kinase superfamily. PAN3 family. As to quaternary structure, homodimer. Forms a heterotrimer with a catalytic subunit PAN2 to form the poly(A)-nuclease (PAN) deadenylation complex. Interacts (via PAM-2 motif) with poly(A)-binding protein PABPC1 (via PABC domain), conferring substrate specificity of the enzyme complex. Interacts with the GW182 family proteins TNRC6A, TNRC6B and TNRC6C. Interacts with YTHDF3. In terms of assembly, interacts with PAN2. Interacts (via N-terminus) with PABPC1 at lower efficiency than isoform 3. Interacts with PAN2. Interacts (via N-terminus) with PABPC1 at higher efficiency than isoform 1.

It localises to the cytoplasm. The protein localises to the P-body. Its subcellular location is the nucleus. Regulatory subunit of the poly(A)-nuclease (PAN) deadenylation complex, one of two cytoplasmic mRNA deadenylases involved in general and miRNA-mediated mRNA turnover. PAN specifically shortens poly(A) tails of RNA and the activity is stimulated by poly(A)-binding protein (PABP). PAN deadenylation is followed by rapid degradation of the shortened mRNA tails by the CCR4-NOT complex. Deadenylated mRNAs are then degraded by two alternative mechanisms, namely exosome-mediated 3'-5' exonucleolytic degradation, or deadenylation-dependent mRNA decapping and subsequent 5'-3' exonucleolytic degradation by XRN1. PAN3 acts as a regulator for PAN activity, recruiting the catalytic subunit PAN2 to mRNA via its interaction with RNA and PABP, and to miRNA targets via its interaction with GW182 family proteins. Its function is as follows. Decreases PAN2-mediated deadenylation, possibly by preventing progression into the second CCR4-NOT mediated stage of biphasic deadenylation. Has a significant effect on mRNA stability, generally stabilizing a subset of the transcriptome. Stabilizes mRNAs degraded by the AU-rich element (ARE)-mediated mRNA decay pathway but promotes degradation of mRNAs by the microRNA-mediated pathway. Its activity influences mRNP remodeling, specifically reducing formation of a subset of P-bodies containing GW220, an isoform of TNRC6A. In terms of biological role, enhances PAN2 deadenylase activity and has an extensive effect on mRNA stability, generally enhancing mRNA decay across the transcriptome by multiple pathways, including the AU-rich element (ARE)-mediated pathway, microRNA-mediated pathway and the nonsense-mediated pathway (NMD). Its activity is required for efficient P-body formation. May be involved in regulating mRNAs of genes involved in cell cycle progression and cell proliferation. The polypeptide is PAN2-PAN3 deadenylation complex subunit Pan3 (Mus musculus (Mouse)).